We begin with the raw amino-acid sequence, 246 residues long: Probable transcriptional regulatory protein YebC (246 aa).

A disordered region spans residues 1–20; it reads MAGHSKWANTRHRKAAQDAK.

It belongs to the TACO1 family.

The protein localises to the cytoplasm. The polypeptide is Probable transcriptional regulatory protein YebC (Escherichia coli O6:K15:H31 (strain 536 / UPEC)).